We begin with the raw amino-acid sequence, 612 residues long: Coagulation factor X-activating enzyme heavy chain (612 aa).

The N-terminal stretch at 1–20 (MMQVLLVTISLAVFPYQGSS) is a signal peptide. The propeptide at 21–193 (IILESGNVND…KKASQLVATS (173 aa)) is or 194. The Peptidase M12B domain maps to 201–395 (TFIELVIVVD…YKPKCILNPP (195 aa)). E204 contacts Ca(2+). The N-linked (GlcNAc...) asparagine glycan is linked to N259. D286 is a binding site for Ca(2+). 3 disulfides stabilise this stretch: C310-C390, C350-C374, and C352-C357. H335 is a binding site for Zn(2+). The active site involves E336. H339 and H345 together coordinate Zn(2+). Residues N353 and N373 are each glycosylated (N-linked (GlcNAc...) asparagine). Residues C390, N393, I405, N408, E412, E415, and D418 each contribute to the Ca(2+) site. The Disintegrin domain maps to 403–489 (PPICGNEIWE…ECPADGFHAN (87 aa)). C461 and C481 are oxidised to a cystine. The short motif at 467-469 (ECD) is the D/ECD-tripeptide element.

This sequence belongs to the venom metalloproteinase (M12B) family. P-III subfamily. P-IIId sub-subfamily. Heterotrimer; disulfide-linked. The heterotrimer consists of 1 heavy chain and 2 light chains (lectins): LC1 and LC2 (AC Q7T045 and AC Q696W1). Zn(2+) serves as cofactor. Post-translationally, N-glycosylated. Contains 8.0% of hexoses, 2.5% of hexosamines and 2.5% of sialic acids. Expressed by the venom gland.

It is found in the secreted. The catalysed reaction is Specifically activates several components of the blood clotting system, including coagulation factor X, coagulation factor IX and protein C by cleavage of Arg-|-Xaa bonds. Has no action on insulin B chain.. Its activity is regulated as follows. Calcium is required for the activity of the heterotrimer. Catalytic subunit of blood coagulation factor X-activating enzyme. Activates coagulation factor X (F10) by cleaving the Arg(234)-Ile(235) bond, activates coagulation factor IX (F9) by cleaving the Arg(226)-Val(227) bond and is also able to activate protein C (PROC). In Macrovipera lebetinus (Levantine viper), this protein is Coagulation factor X-activating enzyme heavy chain.